Consider the following 921-residue polypeptide: Ribosome-releasing factor 2, mitochondrial (921 aa).

Residues 1–55 (MVSALLLRARQNGRAARCLDYPKVKCWALASLPKSSLEKPGFSQVRRFSVFHPQS) constitute a mitochondrion transit peptide. Residues 60 to 368 (DLTRNIGIIA…SVVDLLPSPQ (309 aa)) form the tr-type G domain. Residues 69-76 (AHIDAGKT), 152-156 (DTPGH), and 206-209 (NKMD) contribute to the GTP site.

This sequence belongs to the TRAFAC class translation factor GTPase superfamily. Classic translation factor GTPase family. EF-G/EF-2 subfamily.

It localises to the mitochondrion. Functionally, mitochondrial GTPase that mediates the disassembly of ribosomes from messenger RNA at the termination of mitochondrial protein biosynthesis. Not involved in the GTP-dependent ribosomal translocation step during translation elongation. The protein is Ribosome-releasing factor 2, mitochondrial (mef2) of Emericella nidulans (strain FGSC A4 / ATCC 38163 / CBS 112.46 / NRRL 194 / M139) (Aspergillus nidulans).